The primary structure comprises 598 residues: NADH-quinone oxidoreductase subunit C/D (598 aa).

Positions 1–189 (MTDLTTSDSL…DPYVLTKQKE (189 aa)) are NADH dehydrogenase I subunit C. The interval 213–598 (DFMFLNLGPN…IDFVMSDVDR (386 aa)) is NADH dehydrogenase I subunit D.

It in the N-terminal section; belongs to the complex I 30 kDa subunit family. The protein in the C-terminal section; belongs to the complex I 49 kDa subunit family. As to quaternary structure, NDH-1 is composed of 13 different subunits. Subunits NuoB, CD, E, F, and G constitute the peripheral sector of the complex.

It localises to the cell inner membrane. The catalysed reaction is a quinone + NADH + 5 H(+)(in) = a quinol + NAD(+) + 4 H(+)(out). Its function is as follows. NDH-1 shuttles electrons from NADH, via FMN and iron-sulfur (Fe-S) centers, to quinones in the respiratory chain. The immediate electron acceptor for the enzyme in this species is believed to be ubiquinone. Couples the redox reaction to proton translocation (for every two electrons transferred, four hydrogen ions are translocated across the cytoplasmic membrane), and thus conserves the redox energy in a proton gradient. This is NADH-quinone oxidoreductase subunit C/D from Yersinia pestis bv. Antiqua (strain Angola).